The following is a 95-amino-acid chain: Nucleoid-associated protein MARTH_orf159 (95 aa).

This sequence belongs to the YbaB/EbfC family. Homodimer.

The protein resides in the cytoplasm. It is found in the nucleoid. Binds to DNA and alters its conformation. May be involved in regulation of gene expression, nucleoid organization and DNA protection. This is Nucleoid-associated protein MARTH_orf159 from Metamycoplasma arthritidis (strain 158L3-1) (Mycoplasma arthritidis).